Reading from the N-terminus, the 186-residue chain is Elongation factor P (186 aa).

This sequence belongs to the elongation factor P family.

The protein localises to the cytoplasm. Its pathway is protein biosynthesis; polypeptide chain elongation. Involved in peptide bond synthesis. Stimulates efficient translation and peptide-bond synthesis on native or reconstituted 70S ribosomes in vitro. Probably functions indirectly by altering the affinity of the ribosome for aminoacyl-tRNA, thus increasing their reactivity as acceptors for peptidyl transferase. This Polynucleobacter asymbioticus (strain DSM 18221 / CIP 109841 / QLW-P1DMWA-1) (Polynucleobacter necessarius subsp. asymbioticus) protein is Elongation factor P.